We begin with the raw amino-acid sequence, 38 residues long: Histatin-1 (38 aa).

Residues 1 to 38 form a disordered region; it reads DSHEERHHGRHGHHKYGRKFHEKHHSHRGYRSNYLYDN. Ser-2 is subject to Phosphoserine. The segment covering 8–30 has biased composition (basic residues); that stretch reads HGRHGHHKYGRKFHEKHHSHRGY.

It belongs to the histatin/statherin family.

Its subcellular location is the secreted. Its function is as follows. Histatins (Hsts) are cationic and histidine-rich secreted peptides mainly synthesized by saliva glands of humans and higher primates. Hsts are considered to be major precursors of the protective proteinaceous structure on tooth surfaces (enamel pellicle). This Macaca fascicularis (Crab-eating macaque) protein is Histatin-1 (HTN1).